The chain runs to 693 residues: Polyribonucleotide nucleotidyltransferase (693 aa).

Residues D486 and D492 each coordinate Mg(2+). Residues 553–612 form the KH domain; the sequence is PRFSSMRIDTEKIKDVIGKGGATIRSITEQTGTTIEIEDDGSVKIAATDKAAAANARRLI. The S1 motif domain maps to 622-690; the sequence is GRIYDAKVTK…RQGRVRLSIK (69 aa).

The protein belongs to the polyribonucleotide nucleotidyltransferase family. As to quaternary structure, component of the RNA degradosome, which is a multiprotein complex involved in RNA processing and mRNA degradation. It depends on Mg(2+) as a cofactor.

The protein resides in the cytoplasm. It catalyses the reaction RNA(n+1) + phosphate = RNA(n) + a ribonucleoside 5'-diphosphate. Functionally, involved in mRNA degradation. Catalyzes the phosphorolysis of single-stranded polyribonucleotides processively in the 3'- to 5'-direction. This is Polyribonucleotide nucleotidyltransferase from Dichelobacter nodosus (strain VCS1703A).